Consider the following 122-residue polypeptide: Large ribosomal subunit protein uL18 (122 aa).

Belongs to the universal ribosomal protein uL18 family. Part of the 50S ribosomal subunit; part of the 5S rRNA/L5/L18/L25 subcomplex. Contacts the 5S and 23S rRNAs.

This is one of the proteins that bind and probably mediate the attachment of the 5S RNA into the large ribosomal subunit, where it forms part of the central protuberance. The sequence is that of Large ribosomal subunit protein uL18 from Petrotoga mobilis (strain DSM 10674 / SJ95).